The chain runs to 340 residues: Glycerol-3-phosphate dehydrogenase [NAD(P)+] (340 aa).

NADPH contacts are provided by Ser11, Trp12, Arg33, and Lys106. Sn-glycerol 3-phosphate is bound by residues Lys106, Gly137, and Ser139. Ala141 is an NADPH binding site. 5 residues coordinate sn-glycerol 3-phosphate: Lys192, Asp245, Ser255, Arg256, and Asn257. Lys192 (proton acceptor) is an active-site residue. Arg256 provides a ligand contact to NADPH. Residues Val280 and Glu282 each coordinate NADPH.

It belongs to the NAD-dependent glycerol-3-phosphate dehydrogenase family.

The protein localises to the cytoplasm. It catalyses the reaction sn-glycerol 3-phosphate + NAD(+) = dihydroxyacetone phosphate + NADH + H(+). The enzyme catalyses sn-glycerol 3-phosphate + NADP(+) = dihydroxyacetone phosphate + NADPH + H(+). It participates in membrane lipid metabolism; glycerophospholipid metabolism. In terms of biological role, catalyzes the reduction of the glycolytic intermediate dihydroxyacetone phosphate (DHAP) to sn-glycerol 3-phosphate (G3P), the key precursor for phospholipid synthesis. The chain is Glycerol-3-phosphate dehydrogenase [NAD(P)+] from Bacillus cereus (strain B4264).